Reading from the N-terminus, the 829-residue chain is pre-rRNA 2'-O-ribose RNA methyltransferase FTSJ3 (829 aa).

S-adenosyl-L-methionine-binding residues include G56, W58, D76, D92, and D117. The Proton acceptor role is filled by K157. The segment at 332 to 367 is disordered; sequence ISLSSEEEGDEEESAAETKQASEEEEEREEEEQLNR. Phosphoserine is present on residues S333, S335, S336, S345, and S353. Acidic residues predominate over residues 336–346; the sequence is SEEEGDEEESA. Acidic residues predominate over residues 354–363; that stretch reads EEEEEREEEE. R389 is subject to Citrulline. Disordered stretches follow at residues 443–508 and 528–634; these read FLSD…PLLV and DGFS…GFEV. Positions 456-473 are enriched in acidic residues; that stretch reads DAEDDDDTSLESDLDPEE. Phosphoserine is present on residues S531 and S544. K570 participates in a covalent cross-link: Glycyl lysine isopeptide (Lys-Gly) (interchain with G-Cter in SUMO2). Position 575 is a phosphoserine (S575). Glycyl lysine isopeptide (Lys-Gly) (interchain with G-Cter in SUMO2) cross-links involve residues K626 and K642. S659 carries the phosphoserine modification. Residue K661 forms a Glycyl lysine isopeptide (Lys-Gly) (interchain with G-Cter in SUMO2) linkage. S671 bears the Phosphoserine mark. A Glycyl lysine isopeptide (Lys-Gly) (interchain with G-Cter in SUMO2) cross-link involves residue K693. Residues 722 to 760 adopt a coiled-coil conformation; it reads IKKVAEAKARKKRRMLKKLEQTKKKAEAVVNTVDISERE. R766 carries the citrulline modification. Basic residues predominate over residues 794 to 804; that stretch reads VRRPAGVRGHF. Residues 794–829 are disordered; sequence VRRPAGVRGHFKVVDSRMKKDQRAQRKEQKRNHRRK. The span at 805–820 shows a compositional bias: basic and acidic residues; that stretch reads KVVDSRMKKDQRAQRK.

Belongs to the class I-like SAM-binding methyltransferase superfamily. RNA methyltransferase RlmE family. SPB1 subfamily. Interacts with NIP7. In terms of processing, citrullinated by PADI4.

The protein localises to the nucleus. It is found in the nucleolus. It catalyses the reaction a ribonucleotide in rRNA + S-adenosyl-L-methionine = a 2'-O-methylribonucleotide in rRNA + S-adenosyl-L-homocysteine + H(+). In terms of biological role, RNA 2'-O-methyltransferase involved in the processing of the 34S pre-rRNA to 18S rRNA and in 40S ribosomal subunit formation. The protein is pre-rRNA 2'-O-ribose RNA methyltransferase FTSJ3 (Ftsj3) of Rattus norvegicus (Rat).